Consider the following 382-residue polypeptide: Bifunctional enzyme IspD/IspF (382 aa).

The segment at 1–225 (MTGKPSIAAL…AEERMAMISR (225 aa)) is 2-C-methyl-D-erythritol 4-phosphate cytidylyltransferase. A 2-C-methyl-D-erythritol 2,4-cyclodiphosphate synthase region spans residues 225 to 382 (RTAMGFDVHG…AVATVRVPSI (158 aa)). Asp231 and His233 together coordinate a divalent metal cation. Residues 231–233 (DVH) and 257–258 (HS) contribute to the 4-CDP-2-C-methyl-D-erythritol 2-phosphate site. An a divalent metal cation-binding site is contributed by His265. 4-CDP-2-C-methyl-D-erythritol 2-phosphate contacts are provided by residues 279-281 (DIG), 355-358 (TTTE), Phe362, and Arg365.

It in the N-terminal section; belongs to the IspD/TarI cytidylyltransferase family. IspD subfamily. The protein in the C-terminal section; belongs to the IspF family. A divalent metal cation is required as a cofactor.

It carries out the reaction 2-C-methyl-D-erythritol 4-phosphate + CTP + H(+) = 4-CDP-2-C-methyl-D-erythritol + diphosphate. The catalysed reaction is 4-CDP-2-C-methyl-D-erythritol 2-phosphate = 2-C-methyl-D-erythritol 2,4-cyclic diphosphate + CMP. Its pathway is isoprenoid biosynthesis; isopentenyl diphosphate biosynthesis via DXP pathway; isopentenyl diphosphate from 1-deoxy-D-xylulose 5-phosphate: step 2/6. The protein operates within isoprenoid biosynthesis; isopentenyl diphosphate biosynthesis via DXP pathway; isopentenyl diphosphate from 1-deoxy-D-xylulose 5-phosphate: step 4/6. Its function is as follows. Bifunctional enzyme that catalyzes the formation of 4-diphosphocytidyl-2-C-methyl-D-erythritol from CTP and 2-C-methyl-D-erythritol 4-phosphate (MEP) (IspD), and catalyzes the conversion of 4-diphosphocytidyl-2-C-methyl-D-erythritol 2-phosphate (CDP-ME2P) to 2-C-methyl-D-erythritol 2,4-cyclodiphosphate (ME-CPP) with a corresponding release of cytidine 5-monophosphate (CMP) (IspF). The chain is Bifunctional enzyme IspD/IspF from Rhizorhabdus wittichii (strain DSM 6014 / CCUG 31198 / JCM 15750 / NBRC 105917 / EY 4224 / RW1) (Sphingomonas wittichii).